We begin with the raw amino-acid sequence, 1347 residues long: MDLLSGTYIFAVLLACVVFHSGAQEKNYTIREEMPENVLIGDLLKDLNLSLIPNKSLTTAMQFKLVYKTGDVPLIRIEEDTGEIFTTGARIDREKLCAGIPRDEHCFYEVEVAILPDEIFRLVKIRFLIEDINDNAPLFPATVINISIPENSAINSKYTLPAAVDPDVGINGVQNYELIKSQNIFGLDVIETPEGDKMPQLIVQKELDREEKDTYVMKVKVEDGGFPQRSSTAILQVSVTDTNDNHPVFKETEIEVSIPENAPVGTSVTQLHATDADIGENAKIHFSFSNLVSNIARRLFHLNATTGLITIKEPLDREETPNHKLLVLASDGGLMPARAMVLVNVTDVNDNVPSIDIRYIVNPVNDTVVLSENIPLNTKIALITVTDKDADHNGRVTCFTDHEIPFRLRPVFSNQFLLETAAYLDYESTKEYAIKLLAADAGKPPLNQSAMLFIKVKDENDNAPVFTQSFVTVSIPENNSPGIQLTKVSAMDADSGPNAKINYLLGPDAPPEFSLDCRTGMLTVVKKLDREKEDKYLFTILAKDNGVPPLTSNVTVFVSIIDQNDNSPVFTHNEYNFYVPENLPRHGTVGLITVTDPDYGDNSAVTLSILDENDDFTIDSQTGVIRPNISFDREKQESYTFYVKAEDGGRVSRSSSAKVTINVVDVNDNKPVFIVPPSNCSYELVLPSTNPGTVVFQVIAVDNDTGMNAEVRYSIVGGNTRDLFAIDQETGNITLMEKCDVTDLGLHRVLVKANDLGQPDSLFSVVIVNLFVNESVTNATLINELVRKSTEAPVTPNTEIADVSSPTSDYVKILVAAVAGTITVVVVIFITAVVRCRQAPHLKAAQKNKQNSEWATPNPENRQMIMMKKKKKKKKHSPKNLLLNFVTIEETKADDVDSDGNRVTLDLPIDLEEQTMGKYNWVTTPTTFKPDSPDLARHYKSASPQPAFQIQPETPLNSKHHIIQELPLDNTFVACDSISKCSSSSSDPYSVSDCGYPVTTFEVPVSVHTRPPMKEVVRSCTPMKESTTMEIWIHPQPQRKSEGKVAGKSQRRVTFHLPEGSQESSSDGGLGDHDAGSLTSTSHGLPLGYPQEEYFDRATPSNRTEGDGNSDPESTFIPGLKKAAEITVQPTVEEASDNCTQECLIYGHSDACWMPASLDHSSSSQAQASALCHSPPLSQASTQHHSPRVTQTIALCHSPPVTQTIALCHSPPPIQVSALHHSPPLVQATALHHSPPSAQASALCYSPPLAQAAAISHSSPLPQVIALHRSQAQSSVSLQQGWVQGADGLCSVDQGVQGSATSQFYTMSERLHPSDDSIKVIPLTTFTPRQQARPSRGDSPIMEEHPL.

A signal peptide spans 1–23 (MDLLSGTYIFAVLLACVVFHSGA). The Extracellular portion of the chain corresponds to 24-812 (QEKNYTIREE…VSSPTSDYVK (789 aa)). 7 consecutive Cadherin domains span residues 26–139 (KNYT…APLF), 140–249 (PATV…HPVF), 250–355 (KETE…VPSI), 362–466 (NPVN…APVF), 467–570 (TQSF…SPVF), 571–673 (THNE…KPVF), and 677–795 (PSNC…APVT). N-linked (GlcNAc...) asparagine glycans are attached at residues N27, N48, and N54. N344 carries N-linked (GlcNAc...) asparagine glycosylation. An N-linked (GlcNAc...) asparagine glycan is attached at N553. N-linked (GlcNAc...) asparagine glycosylation is present at N773. A helical membrane pass occupies residues 813–833 (ILVAAVAGTITVVVVIFITAV). Residues 834–1347 (VRCRQAPHLK…DSPIMEEHPL (514 aa)) are Cytoplasmic-facing. Disordered stretches follow at residues 1057 to 1091 (LPEG…GYPQ), 1097 to 1116 (RATP…ESTF), and 1326 to 1347 (FTPR…EHPL).

Expressed strongly in fetal brain and brain (cortex, amygdala, thalamus, substantia nigra, hippocampus, caudate nucleus and corpus callosum). Expressed at low level in testis.

The protein localises to the cell membrane. In terms of biological role, potential calcium-dependent cell-adhesion protein. This chain is Protocadherin-11 X-linked (PCDH11X), found in Homo sapiens (Human).